The following is a 437-amino-acid chain: MPATIAVTHLGCEKNRIDTEHMLGLLAQAGYQIDSDEDKAEYVLVNTCSFIGPARTESVRTLVNLAEQGKKIIIAGCLPQMFRDELLKEIPEAVAIVGTGDYHRIVEVVERSRTGERVSLVSATPTYIADEHLPRYRTTTEAVAYLKIAEGCDYRCAFCIIPHLRGDQRSRPIESIVAEAKQLASEGVKELILISQISTNYGLDLYGKPRLADLLRALGEVDIPWVRVHYAYPTGLTDELLTAVEQTANVLPYFDVPLQHSHPEVLRAMNRPWQADLNTRLLERIRERLPEATLRTTLIVGFPGESEAHFAHLCAFVERSEFDHVGVFAYSREENTAAANLEGQIPEAIKKRRRRDLMRLQQTISQRRNASQVGRVVPVLIEQENTQKKVWLGRSARFSPEIDGQVIVCGGAALNQLIPVRITAATPYDLCGEVFQA.

Residues 3 to 114 (ATIAVTHLGC…IVEVVERSRT (112 aa)) form the MTTase N-terminal domain. [4Fe-4S] cluster is bound by residues Cys-12, Cys-48, Cys-77, Cys-152, Cys-156, and Cys-159. A Radical SAM core domain is found at 138–367 (TTTEAVAYLK…MRLQQTISQR (230 aa)). The TRAM domain maps to 370–436 (ASQVGRVVPV…PYDLCGEVFQ (67 aa)).

This sequence belongs to the methylthiotransferase family. RimO subfamily. Requires [4Fe-4S] cluster as cofactor.

The protein localises to the cytoplasm. The enzyme catalyses L-aspartate(89)-[ribosomal protein uS12]-hydrogen + (sulfur carrier)-SH + AH2 + 2 S-adenosyl-L-methionine = 3-methylsulfanyl-L-aspartate(89)-[ribosomal protein uS12]-hydrogen + (sulfur carrier)-H + 5'-deoxyadenosine + L-methionine + A + S-adenosyl-L-homocysteine + 2 H(+). In terms of biological role, catalyzes the methylthiolation of an aspartic acid residue of ribosomal protein uS12. This is Ribosomal protein uS12 methylthiotransferase RimO from Gloeobacter violaceus (strain ATCC 29082 / PCC 7421).